The following is a 130-amino-acid chain: Histone H2A type 1 (130 aa).

Residues 1-22 (MSGRGKQGGKTRAKAKTRSSRA) form a disordered region. Position 2 is an N-acetylserine (serine 2). Serine 2 is modified (phosphoserine). Lysine 6 carries the N6-(2-hydroxyisobutyryl)lysine modification. An N6-acetyllysine modification is found at lysine 6. Positions 7 to 19 (QGGKTRAKAKTRS) are enriched in basic residues. Residue lysine 10 is modified to N6-(2-hydroxyisobutyryl)lysine; alternate. The residue at position 10 (lysine 10) is an N6-lactoyllysine; alternate. At lysine 10 the chain carries N6-succinyllysine. Residues lysine 14 and lysine 16 each participate in a glycyl lysine isopeptide (Lys-Gly) (interchain with G-Cter in ubiquitin) cross-link. An N6-(2-hydroxyisobutyryl)lysine; alternate modification is found at lysine 37. An N6-(2-hydroxyisobutyryl)lysine mark is found at lysine 75 and lysine 76. An N6-(2-hydroxyisobutyryl)lysine; alternate modification is found at lysine 96. N6-succinyllysine is present on lysine 96. Residue lysine 96 is modified to N6-glutaryllysine; alternate. At glutamine 105 the chain carries N5-methylglutamine. Lysine 119 carries the post-translational modification N6-(2-hydroxyisobutyryl)lysine; alternate. Lysine 119 is modified (N6-glutaryllysine; alternate). A Glycyl lysine isopeptide (Lys-Gly) (interchain with G-Cter in ubiquitin) cross-link involves residue lysine 120.

Belongs to the histone H2A family. The nucleosome is a histone octamer containing two molecules each of H2A, H2B, H3 and H4 assembled in one H3-H4 heterotetramer and two H2A-H2B heterodimers. The octamer wraps approximately 147 bp of DNA. In terms of processing, monoubiquitination of Lys-120 (H2AK119Ub) gives a specific tag for epigenetic transcriptional repression. Following DNA double-strand breaks (DSBs), it is ubiquitinated through 'Lys-63' linkage of ubiquitin moieties, leading to the recruitment of repair proteins to sites of DNA damage. H2AK119Ub and ionizing radiation-induced 'Lys-63'-linked ubiquitination are distinct events. Phosphorylation on Ser-2 is enhanced during mitosis. Phosphorylation on Ser-2 directly represses transcription. Post-translationally, glutamine methylation at Gln-105 (H2AQ104me) by FBL is specifically dedicated to polymerase I. It is present at 35S ribosomal DNA locus and impairs binding of the FACT complex.

The protein resides in the nucleus. It is found in the chromosome. Functionally, core component of nucleosome. Nucleosomes wrap and compact DNA into chromatin, limiting DNA accessibility to the cellular machineries which require DNA as a template. Histones thereby play a central role in transcription regulation, DNA repair, DNA replication and chromosomal stability. DNA accessibility is regulated via a complex set of post-translational modifications of histones, also called histone code, and nucleosome remodeling. This chain is Histone H2A type 1, found in Xenopus laevis (African clawed frog).